The sequence spans 356 residues: Protein RecA (356 aa).

ATP is bound at residue 67–74 (GPESSGKT).

This sequence belongs to the RecA family.

The protein localises to the cytoplasm. In terms of biological role, can catalyze the hydrolysis of ATP in the presence of single-stranded DNA, the ATP-dependent uptake of single-stranded DNA by duplex DNA, and the ATP-dependent hybridization of homologous single-stranded DNAs. It interacts with LexA causing its activation and leading to its autocatalytic cleavage. The chain is Protein RecA from Yersinia pseudotuberculosis serotype I (strain IP32953).